The primary structure comprises 975 residues: Protein cramped (975 aa).

5 disordered regions span residues 1–37 (MEELCKQPPPPPPLPPPPSSPSVAIEDPLPNGKGGGA), 71–111 (QKMK…GSGK), 318–346 (AIFPSSLPSTATNNNNNNNETEPMQPSVA), 403–450 (PVAA…LMKM), and 809–844 (PIDRVDGTSSGGISSSGSKPDSSMGATAASQDQEPG). The span at 7–20 (QPPPPPPLPPPPSS) shows a compositional bias: pro residues. Residues 86 to 98 (SEREPNKKEEKAA) are compositionally biased toward basic and acidic residues. Residues 100–111 (KTPSQLKTGSGK) show a composition bias toward polar residues. One can recognise an SANT domain in the interval 109 to 173 (SGKTTWTNVE…HYYQTYHKIC (65 aa)). Basic and acidic residues predominate over residues 410 to 425 (LRTESGSEKRSPETKK). The segment covering 815-833 (GTSSGGISSSGSKPDSSMG) has biased composition (low complexity).

This sequence belongs to the cramped family.

It localises to the nucleus. Its function is as follows. Polycomb group (Pc-G) genes are needed to maintain expression patterns of the homeotic selector genes of the Antennapedia (Antp-C) and Bithorax (Bx-C) complexes, and hence for the maintenance of segmental determination. Can act as a modifier of position effect variegation (PEV). The chain is Protein cramped (crm) from Drosophila sechellia (Fruit fly).